Here is a 217-residue protein sequence, read N- to C-terminus: MMAAGPRASLLLAFALLCLPWTQEVGAFPAMSLSGLFANAVLRAQHLHQLAADTFKEFERTYIPEGQRYSIQNTQVAFCFSETIPAPTGKNEAQQKSDLELLRISLLLIQSWLGPLQFLSRVFTNSLVFGTSDRVYEKLKDLEEGILALMRELEDGTPRAGQILKQTYDKFDTNMRSDDALLKNYGLLSCFRKDLHKTETYLRVMKCRRFGEASCAF.

Residues 1–27 (MMAAGPRASLLLAFALLCLPWTQEVGA) form the signal peptide. His-46 lines the Zn(2+) pocket. Cys-79 and Cys-190 are oxidised to a cystine. Position 132 is a phosphoserine (Ser-132). Residue Glu-199 coordinates Zn(2+). The cysteines at positions 207 and 215 are disulfide-linked.

Belongs to the somatotropin/prolactin family.

It localises to the secreted. Functionally, plays an important role in growth control. Its major role in stimulating body growth is to stimulate the liver and other tissues to secrete IGF1. It stimulates both the differentiation and proliferation of myoblasts. It also stimulates amino acid uptake and protein synthesis in muscle and other tissues. The polypeptide is Somatotropin (GH1) (Cervus elaphus (Red deer)).